The primary structure comprises 67 residues: UPF0434 protein Bcep1808_2639 (67 aa).

It belongs to the UPF0434 family.

This chain is UPF0434 protein Bcep1808_2639, found in Burkholderia vietnamiensis (strain G4 / LMG 22486) (Burkholderia cepacia (strain R1808)).